Reading from the N-terminus, the 481-residue chain is Surface lipoprotein assembly modifier 1 (481 aa).

An N-terminal signal peptide occupies residues 1–23 (MSIQTKFILFLSSSLFLTPYSVA). Residues 25-192 (EKSPQPHDGR…QYLSALNQRD (168 aa)) are N-terminal domain. The segment at 193–481 (QWKIQGGFSF…RIYVEISKTF (289 aa)) is C-terminal probable beta barrel. 14 consecutive transmembrane segments (beta stranded) span residues 194-204 (WKIQGGFSFLN), 233-243 (SYFGNAEKKWS), 248-258 (HFTKLSLEGSG), 271-281 (NARAGVGLGYQ), 285-295 (FELSLMPFTEK), 315-325 (SGARLDLSNWL), 329-338 (WQISTALEYG), 353-363 (YLASATLLYLA), 368-377 (YWFGGADYNR), 390-400 (KNVRLGWGQEW), 405-414 (STRLILNYAR), 432-441 (YASVLTIWHR), 448-458 (ITPKLSWSYQK), and 471-481 (NRIYVEISKTF).

This sequence belongs to the Slam family.

It is found in the cell outer membrane. Functionally, required for correct export to the cell surface of some cell outer membrane lipoproteins. The sequence is that of Surface lipoprotein assembly modifier 1 from Haemophilus influenzae (strain ATCC 51907 / DSM 11121 / KW20 / Rd).